Here is a 135-residue protein sequence, read N- to C-terminus: Cytochrome c-type biogenesis protein CcmE (135 aa).

The Cytoplasmic segment spans residues 1 to 8; that stretch reads MLLLRWKR. The helical; Signal-anchor for type II membrane protein transmembrane segment at 9-29 threads the bilayer; the sequence is FWFLSLGILLFSGVVSLMLFN. Residues 30 to 135 are Periplasmic-facing; the sequence is LSESISFFYL…EDFIKSVRGE (106 aa). Heme contacts are provided by His118 and Tyr122.

Belongs to the CcmE/CycJ family.

It localises to the cell inner membrane. In terms of biological role, heme chaperone required for the biogenesis of c-type cytochromes. Transiently binds heme delivered by CcmC and transfers the heme to apo-cytochromes in a process facilitated by CcmF and CcmH. In Neorickettsia sennetsu (strain ATCC VR-367 / Miyayama) (Ehrlichia sennetsu), this protein is Cytochrome c-type biogenesis protein CcmE.